The primary structure comprises 398 residues: S-adenosylmethionine synthase (398 aa).

ATP is bound at residue His-17. Mg(2+) is bound at residue Asp-19. Glu-45 contacts K(+). Glu-58 and Gln-101 together coordinate L-methionine. Residues 101–111 (QSPDIAQGVDK) are flexible loop. ATP is bound by residues 176–178 (DGK), 243–244 (RF), Asp-252, 258–259 (RK), and Lys-279. Residue Asp-252 participates in L-methionine binding. Residue Lys-283 participates in L-methionine binding.

It belongs to the AdoMet synthase family. Homotetramer; dimer of dimers. Mg(2+) is required as a cofactor. K(+) serves as cofactor.

It is found in the cytoplasm. It carries out the reaction L-methionine + ATP + H2O = S-adenosyl-L-methionine + phosphate + diphosphate. The protein operates within amino-acid biosynthesis; S-adenosyl-L-methionine biosynthesis; S-adenosyl-L-methionine from L-methionine: step 1/1. Functionally, catalyzes the formation of S-adenosylmethionine (AdoMet) from methionine and ATP. The overall synthetic reaction is composed of two sequential steps, AdoMet formation and the subsequent tripolyphosphate hydrolysis which occurs prior to release of AdoMet from the enzyme. The sequence is that of S-adenosylmethionine synthase from Staphylococcus aureus (strain Mu3 / ATCC 700698).